The chain runs to 236 residues: MEKETLLYEGKAKKLYFTDDSNVLWVEYCDQATALNGARKEQITGKGALNNQITSLIFEKLNAEGLETHFIKKLSKTEQLNKKVSIIPLEVVLRNVVAGSFAKRFGLEEGIVLEEPIVEFYYKDDALDDPFINDEHVKFLNIASDSEIEFLKKETRKINKILKKIWTEIGLTLVDFKLEFGRLADGSIILADEISPDTSRLWDAKGQHMDKDVFRRNIGDLIETYTEVLNLLEKTK.

Belongs to the SAICAR synthetase family.

It carries out the reaction 5-amino-1-(5-phospho-D-ribosyl)imidazole-4-carboxylate + L-aspartate + ATP = (2S)-2-[5-amino-1-(5-phospho-beta-D-ribosyl)imidazole-4-carboxamido]succinate + ADP + phosphate + 2 H(+). The protein operates within purine metabolism; IMP biosynthesis via de novo pathway; 5-amino-1-(5-phospho-D-ribosyl)imidazole-4-carboxamide from 5-amino-1-(5-phospho-D-ribosyl)imidazole-4-carboxylate: step 1/2. This is Phosphoribosylaminoimidazole-succinocarboxamide synthase (purC) from Lactococcus lactis subsp. cremoris (Streptococcus cremoris).